The primary structure comprises 250 residues: NH(3)-dependent NAD(+) synthetase (250 aa).

31 to 38 (GISGGIDS) lines the ATP pocket. Residue aspartate 37 participates in Mg(2+) binding. Arginine 122 is a binding site for deamido-NAD(+). Threonine 142 is a binding site for ATP. Glutamate 147 lines the Mg(2+) pocket. Lysine 155 and aspartate 162 together coordinate deamido-NAD(+). ATP contacts are provided by lysine 171 and serine 193. 239 to 240 (HK) is a binding site for deamido-NAD(+).

It belongs to the NAD synthetase family. In terms of assembly, homodimer.

The enzyme catalyses deamido-NAD(+) + NH4(+) + ATP = AMP + diphosphate + NAD(+) + H(+). It participates in cofactor biosynthesis; NAD(+) biosynthesis; NAD(+) from deamido-NAD(+) (ammonia route): step 1/1. Catalyzes the ATP-dependent amidation of deamido-NAD to form NAD. Uses ammonia as a nitrogen source. The polypeptide is NH(3)-dependent NAD(+) synthetase (Alkaliphilus oremlandii (strain OhILAs) (Clostridium oremlandii (strain OhILAs))).